Consider the following 126-residue polypeptide: Large ribosomal subunit protein bL17 (126 aa).

This sequence belongs to the bacterial ribosomal protein bL17 family. In terms of assembly, part of the 50S ribosomal subunit. Contacts protein L32.

The chain is Large ribosomal subunit protein bL17 from Coxiella burnetii (strain CbuK_Q154) (Coxiella burnetii (strain Q154)).